Here is an 84-residue protein sequence, read N- to C-terminus: UPF0457 protein BALH_2270 (84 aa).

This sequence belongs to the UPF0457 family.

In Bacillus thuringiensis (strain Al Hakam), this protein is UPF0457 protein BALH_2270.